An 878-amino-acid polypeptide reads, in one-letter code: Staphylococcal nuclease domain-containing protein 1 (878 aa).

TNase-like domains are found at residues 3-142 and 167-312; these read QYVS…IWGP and KKLN…IWKN. Ser316 bears the Phosphoserine mark. TNase-like domains follow at residues 326 to 464 and 493 to 626; these read KDYS…MWSG and RKLS…MWHD. A Tudor domain is found at 695-755; that stretch reads KINVGMNVAA…SSLPDTYTKL (61 aa).

The protein resides in the cytoplasm. Its subcellular location is the cytosol. This Schizosaccharomyces pombe (strain 972 / ATCC 24843) (Fission yeast) protein is Staphylococcal nuclease domain-containing protein 1.